A 263-amino-acid chain; its full sequence is MLHITPLAAFNDNYIWVFQSQQNTGAESSGIYVVDPGDGQVVIDYLIQTGQALLGILITHHHHDHTGGIEQLIRRFGAQIAVYGPQSENIIGVNHPIVANGDISLTNAGLNAKVIQLPGHTLGHIAYLIEDVLFCGDTLFSAGCGRIFEGSAEQMYQSLSELGQLPDNTKVCCAHEYTIANLAFANRVEPNNAALIDYTKKAQALRAQNLPTLPSSIGQEKAINPFLRSDSEEICQSLSIQFQQPINNPLQSFSLLRQWKDNF.

Positions 60, 62, 64, 65, 120, 137, and 175 each coordinate Zn(2+).

It belongs to the metallo-beta-lactamase superfamily. Glyoxalase II family. Monomer. Zn(2+) serves as cofactor.

The catalysed reaction is an S-(2-hydroxyacyl)glutathione + H2O = a 2-hydroxy carboxylate + glutathione + H(+). It functions in the pathway secondary metabolite metabolism; methylglyoxal degradation; (R)-lactate from methylglyoxal: step 2/2. Thiolesterase that catalyzes the hydrolysis of S-D-lactoyl-glutathione to form glutathione and D-lactic acid. This Shewanella pealeana (strain ATCC 700345 / ANG-SQ1) protein is Hydroxyacylglutathione hydrolase.